Reading from the N-terminus, the 36-residue chain is Pancreatic polypeptide (36 aa).

The residue at position 36 (Tyr36) is a Tyrosine amide.

Belongs to the NPY family.

It is found in the secreted. Its function is as follows. Hormone secreted by pancreatic cells that acts as a regulator of pancreatic and gastrointestinal functions probably by signaling through the G protein-coupled receptor NPY4R2. In Erinaceus europaeus (Western European hedgehog), this protein is Pancreatic polypeptide (PPY).